A 301-amino-acid chain; its full sequence is Ribosomal RNA large subunit methyltransferase F (301 aa).

The protein belongs to the methyltransferase superfamily. METTL16/RlmF family.

Its subcellular location is the cytoplasm. It catalyses the reaction adenosine(1618) in 23S rRNA + S-adenosyl-L-methionine = N(6)-methyladenosine(1618) in 23S rRNA + S-adenosyl-L-homocysteine + H(+). Functionally, specifically methylates the adenine in position 1618 of 23S rRNA. The polypeptide is Ribosomal RNA large subunit methyltransferase F (Colwellia psychrerythraea (strain 34H / ATCC BAA-681) (Vibrio psychroerythus)).